Consider the following 141-residue polypeptide: Lutropin subunit beta (141 aa).

Residues 1 to 20 form the signal peptide; it reads MEMFQGLLLWLLLNTGGAWA. Cystine bridges form between cysteine 29/cysteine 77, cysteine 43/cysteine 92, cysteine 46/cysteine 130, cysteine 54/cysteine 108, cysteine 58/cysteine 110, and cysteine 113/cysteine 120. Residue asparagine 33 is glycosylated (N-linked (GlcNAc...) asparagine).

Belongs to the glycoprotein hormones subunit beta family. Heterodimer of a common alpha chain and a unique beta chain which confers biological specificity to thyrotropin, lutropin, follitropin and gonadotropin.

Its subcellular location is the secreted. Functionally, promotes spermatogenesis and ovulation by stimulating the testes and ovaries to synthesize steroids. This chain is Lutropin subunit beta (LHB), found in Ailuropoda melanoleuca (Giant panda).